The sequence spans 1329 residues: Synergin gamma (1329 aa).

The stretch at 112 to 152 forms a coiled coil; the sequence is MQKQFAEEQQKRFEQQQKLLEEERKRRQFEEQKQKLRLLSS. The segment at 175-211 is disordered; it reads GFSRDAKMHPTPASHPKKPDCPTSSHSTKTVSPSSAF. Residues 197-209 show a composition bias toward low complexity; that stretch reads TSSHSTKTVSPSS. The EH domain maps to 393–504; that stretch reads NESLVPDAYK…TPVSQPTAMT (112 aa). Residues 555–559 carry the DFXDF motif 1 motif; sequence DFQDF. Position 571 is a phosphoserine (S571). A compositionally biased stretch (polar residues) spans 578-594; it reads VPASSKTSNSQHGNSAP. The interval 578 to 600 is disordered; sequence VPASSKTSNSQHGNSAPSLLIPL. Residue K609 is modified to N6-acetyllysine. The interaction with AP1G1 stretch occupies residues 614 to 878; the sequence is KGISAEKPSE…ADFHSSKFSS (265 aa). Disordered stretches follow at residues 661-701 and 730-753; these read GTDD…TQTQ and AFST…PASL. At S676 the chain carries Phosphoserine. An interaction with AP1G1, AP1G2 and GGA1 region spans residues 761 to 773; sequence LADDFGEFNLFGE. The DFXDF motif 2 signature appears at 785-789; that stretch reads DFADF. The interval 797–835 is disordered; sequence IPSEPKADDKYEALREEGSPGALSTSTVEGAHNPPVSSS. The segment covering 801–814 has biased composition (basic and acidic residues); sequence PKADDKYEALREEG. At S815 the chain carries Phosphoserine. The residue at position 836 (K836) is an N6-acetyllysine. S844 and S864 each carry phosphoserine. Disordered regions lie at residues 856-922, 941-1042, and 1088-1113; these read KENT…DSED, HVMS…FGEF, and SLSL…RDRS. The span at 864–873 shows a compositional bias: basic and acidic residues; sequence SDGDFADFHS. A DFXDF motif 3 motif is present at residues 867–871; that stretch reads DFADF. Positions 874-883 are enriched in low complexity; it reads SKFSSTSSDK. 9 positions are modified to phosphoserine: S904, S944, S947, S997, S1021, S1088, S1090, S1102, and S1113. Positions 944–955 are enriched in polar residues; the sequence is SDSSLDLPTVSG. The segment covering 1016-1028 has biased composition (polar residues); that stretch reads ENTCPSPASSVAS. T1115 is modified (phosphothreonine).

In terms of assembly, self-associates. Interacts with GGA1 (via GAE domain). Interacts with GGA2 and GGA3. Interacts with AP1G1 (via GAE domain), a subunit of adapter protein complex AP-1. Interacts with AP1G2 (via GAE domain) a subunit of adapter protein complex AP-1. Component of the aftiphilin/p200/gamma-synergin complex, at least composed of AFTPH/aftiphilin, HEATR5B/p200a and SYNRG/gamma-synergin, which plays a role in the AP1G1/AP-1-mediated trafficking of transferrin from early to recycling endosomes. Within the complex interacts with AFTPH/aftiphilin and HEATR5B/p200a; the interactions are direct. Interacts (via EH domain) with SCAMP1. As to expression, detected in brain and liver (at protein level). Ubiquitously expressed.

Its subcellular location is the cytoplasm. The protein localises to the golgi apparatus. It is found in the trans-Golgi network membrane. It localises to the perinuclear region. The protein resides in the cytoplasmic vesicle. Its subcellular location is the clathrin-coated vesicle. Functionally, plays a role in endocytosis and/or membrane trafficking at the trans-Golgi network (TGN). May act by linking the adapter protein complex AP-1 to other proteins. Component of clathrin-coated vesicles. Component of the aftiphilin/p200/gamma-synergin complex, which plays roles in AP1G1/AP-1-mediated protein trafficking including the trafficking of transferrin from early to recycling endosomes, and the membrane trafficking of furin and the lysosomal enzyme cathepsin D between the trans-Golgi network (TGN) and endosomes. The chain is Synergin gamma (Synrg) from Rattus norvegicus (Rat).